A 204-amino-acid polypeptide reads, in one-letter code: ATP phosphoribosyltransferase (204 aa).

Belongs to the ATP phosphoribosyltransferase family. Short subfamily. As to quaternary structure, heteromultimer composed of HisG and HisZ subunits.

Its subcellular location is the cytoplasm. The catalysed reaction is 1-(5-phospho-beta-D-ribosyl)-ATP + diphosphate = 5-phospho-alpha-D-ribose 1-diphosphate + ATP. It functions in the pathway amino-acid biosynthesis; L-histidine biosynthesis; L-histidine from 5-phospho-alpha-D-ribose 1-diphosphate: step 1/9. Its function is as follows. Catalyzes the condensation of ATP and 5-phosphoribose 1-diphosphate to form N'-(5'-phosphoribosyl)-ATP (PR-ATP). Has a crucial role in the pathway because the rate of histidine biosynthesis seems to be controlled primarily by regulation of HisG enzymatic activity. This is ATP phosphoribosyltransferase from Staphylococcus aureus (strain USA300).